Here is a 307-residue protein sequence, read N- to C-terminus: Pantothenate kinase (307 aa).

90–97 (GSVAVGKS) provides a ligand contact to ATP.

It belongs to the prokaryotic pantothenate kinase family.

Its subcellular location is the cytoplasm. It catalyses the reaction (R)-pantothenate + ATP = (R)-4'-phosphopantothenate + ADP + H(+). Its pathway is cofactor biosynthesis; coenzyme A biosynthesis; CoA from (R)-pantothenate: step 1/5. This is Pantothenate kinase from Enterococcus faecalis (strain ATCC 700802 / V583).